Here is a 413-residue protein sequence, read N- to C-terminus: Aminopeptidase 2 (413 aa).

A divalent metal cation is bound by residues Glu250, Glu316, Glu340, His345, His378, and Asp380.

It belongs to the peptidase M29 family. Homodimer. Requires Co(2+) as cofactor. It depends on Zn(2+) as a cofactor. Mg(2+) is required as a cofactor.

Broad specificity metal-dependent exopeptidase, releasing all N-terminal amino acids. The protein is Aminopeptidase 2 of Geobacillus stearothermophilus (Bacillus stearothermophilus).